We begin with the raw amino-acid sequence, 1684 residues long: Protein Wiz (1684 aa).

A disordered region spans residues 1–77 (MEGLLAGGLA…PGLSEALPRA (77 aa)). A compositionally biased stretch (basic and acidic residues) spans 13–24 (DHPRGPAPREDI). C2H2-type zinc fingers lie at residues 308-330 (FPCI…MSQH), 345-367 (LACS…WQLH), 454-477 (NTCV…RLVH), 734-756 (RKCP…VRGH), and 802-824 (MRCD…ARAH). Residues 854 to 876 (LPPSPLGREPGGPPRSFLTSRRP) form a disordered region. The C2H2-type 6 zinc-finger motif lies at 903–925 (TTCEVCGACFETRKGLSSHARSH). Residues K916, K972, K988, K1000, and K1021 each participate in a glycyl lysine isopeptide (Lys-Gly) (interchain with G-Cter in SUMO2) cross-link. Residues 1005 to 1072 (FSAKGLTHPS…PLNLTSGPEP (68 aa)) are disordered. At S1029 the chain carries Phosphoserine. T1031 is subject to Phosphothreonine. Glycyl lysine isopeptide (Lys-Gly) (interchain with G-Cter in SUMO2) cross-links involve residues K1033 and K1038. Phosphoserine is present on residues S1039 and S1045. The segment covering 1040–1057 (PQLSLSPRPTSPKAQWPQ) has biased composition (polar residues). Residue T1049 is modified to Phosphothreonine. S1050 and S1058 each carry phosphoserine. Residues 1063–1067 (PLNLT) form an interaction with CTBP1 and CTBP2 1 region. The C2H2-type 7 zinc finger occupies 1076 to 1098 (IRCEFCGEFFENRKGLSSHARSH). K1089 participates in a covalent cross-link: Glycyl lysine isopeptide (Lys-Gly) (interchain with G-Cter in SUMO2). A phosphoserine mark is found at S1112 and S1139. Residues 1127-1208 (SRPGGHLHPP…GLATPSLPKK (82 aa)) form a disordered region. Glycyl lysine isopeptide (Lys-Gly) (interchain with G-Cter in SUMO2) cross-links involve residues K1141 and K1145. Phosphoserine is present on residues S1155, S1160, and S1167. Residues K1171 and K1172 each participate in a glycyl lysine isopeptide (Lys-Gly) (interchain with G-Cter in SUMO2) cross-link. 2 positions are modified to phosphoserine: S1179 and S1184. N6,N6,N6-trimethyllysine; by EHMT2; alternate is present on K1195. The residue at position 1195 (K1195) is an N6,N6-dimethyllysine; by EHMT2; alternate. Residue K1210 forms a Glycyl lysine isopeptide (Lys-Gly) (interchain with G-Cter in SUMO2) linkage. Residues 1247 to 1251 (PLNLS) are interaction with CTBP1 and CTBP2 2. The C2H2-type 8 zinc finger occupies 1260-1282 (IRCEFCGEFFENRKGLSSHARSH). Residue K1273 forms a Glycyl lysine isopeptide (Lys-Gly) (interchain with G-Cter in SUMO2) linkage. S1296 is modified (phosphoserine). A Glycyl lysine isopeptide (Lys-Gly) (interchain with G-Cter in SUMO2) cross-link involves residue K1315. Residues 1320–1384 (AGDLAPALTE…SKPSAASYLG (65 aa)) form a disordered region. A compositionally biased stretch (low complexity) spans 1335–1351 (AAPGALHSPLPLSPLAS). S1342 and S1347 each carry phosphoserine. Residues K1376, K1389, K1403, K1405, and K1415 each participate in a glycyl lysine isopeptide (Lys-Gly) (interchain with G-Cter in SUMO2) cross-link. Residues 1430 to 1452 (ACCELCGLYFENRKALASHARAH) form a C2H2-type 9 zinc finger. Glycyl lysine isopeptide (Lys-Gly) (interchain with G-Cter in SUMO2) cross-links involve residues K1481, K1497, and K1510. Disordered stretches follow at residues 1496 to 1587 (TKKF…GEEV) and 1592 to 1611 (QKLE…PSLV). At S1550 the chain carries Phosphoserine. A Glycyl lysine isopeptide (Lys-Gly) (interchain with G-Cter in SUMO1); alternate cross-link involves residue K1556. K1556 is covalently cross-linked (Glycyl lysine isopeptide (Lys-Gly) (interchain with G-Cter in SUMO2); alternate). The span at 1556 to 1574 (KSEEHQRQNINKFERRQAR) shows a compositional bias: basic and acidic residues. Glycyl lysine isopeptide (Lys-Gly) (interchain with G-Cter in SUMO2) cross-links involve residues K1567 and K1593. The segment covering 1599–1611 (QPPPRVRPVPSLV) has biased composition (pro residues). Residues 1629–1655 (LKCRFCEVEFQGPLSIQEEWVRHLQRH) form a C2H2-type 10 zinc finger. Residues 1662 to 1684 (SKADPPPEEPQAPQAQTAAVEAP) form a disordered region. K1663 participates in a covalent cross-link: Glycyl lysine isopeptide (Lys-Gly) (interchain with G-Cter in SUMO2). Residues 1672–1684 (QAPQAQTAAVEAP) show a composition bias toward low complexity.

It belongs to the krueppel C2H2-type zinc-finger protein family. In terms of assembly, part of a complex containing at least CDYL, REST, WIZ, SETB1, EHMT1 and EHMT2. Interacts with EHMT1, EHMT2, CTBP1 and CTBP2. According to PubMed:9795207, isoform L and isoform S are brain-specific. According to PubMed:16702210, isoform S is ubiquitously expressed.

The protein resides in the nucleus. May link EHMT1 and EHMT2 histone methyltransferases to the CTBP corepressor machinery. May be involved in EHMT1-EHMT2 heterodimer formation and stabilization. The chain is Protein Wiz (Wiz) from Mus musculus (Mouse).